A 244-amino-acid chain; its full sequence is 3-deoxy-manno-octulosonate cytidylyltransferase (244 aa).

The protein belongs to the KdsB family.

It is found in the cytoplasm. The enzyme catalyses 3-deoxy-alpha-D-manno-oct-2-ulosonate + CTP = CMP-3-deoxy-beta-D-manno-octulosonate + diphosphate. Its pathway is nucleotide-sugar biosynthesis; CMP-3-deoxy-D-manno-octulosonate biosynthesis; CMP-3-deoxy-D-manno-octulosonate from 3-deoxy-D-manno-octulosonate and CTP: step 1/1. The protein operates within bacterial outer membrane biogenesis; lipopolysaccharide biosynthesis. Activates KDO (a required 8-carbon sugar) for incorporation into bacterial lipopolysaccharide in Gram-negative bacteria. In Vesicomyosocius okutanii subsp. Calyptogena okutanii (strain HA), this protein is 3-deoxy-manno-octulosonate cytidylyltransferase.